The following is a 567-amino-acid chain: Protein phosphatase 1 regulatory inhibitor subunit 16B (567 aa).

Positions 15 to 55 form a coiled coil; that stretch reads EKVPTLERLRAAQKRRAQQLKKWAQYEQDLQHRKRKHERKR. Ser-69 is subject to Phosphoserine. ANK repeat units lie at residues 100–129, 133–162, 228–257, and 261–290; these read DGLT…NVNA, ELWT…DLLA, QGAT…RVDV, and DGWE…SLSA. Ser-333, Ser-337, and Ser-350 each carry phosphoserine. The segment at 378-403 is disordered; it reads RTSTYNGDIRETRTDQENKDPNPRLE. The segment covering 385-403 has biased composition (basic and acidic residues); the sequence is DIRETRTDQENKDPNPRLE. The residue at position 476 (Ser-476) is a Phosphoserine. The segment covering 504–515 has biased composition (polar residues); that stretch reads SSMARTGESSSE. The segment at 504–525 is disordered; it reads SSMARTGESSSEGKAPLIGGRT. The ANK 5 repeat unit spans residues 530 to 559; the sequence is SNGTSVYYTVTSGDPPLLKFKAPIEEMEEK. A lipid anchor (S-palmitoyl cysteine) is attached at Cys-563. Residue Cys-564 is modified to Cysteine methyl ester. Cys-564 is lipidated: S-farnesyl cysteine. The propeptide at 565 to 567 is removed in mature form; sequence RIS.

In terms of assembly, interacts with PPP1CA, PPP1CB and MSN. Interacts (via its fourth ankyrin repeat) with the mature dimeric form of RPSA/LAMR1. Interacts with EEF1A1. Interacts with PTEN. Interacts with ECE1. In terms of processing, phosphorylated by PKA and, after PKA priming, by GSK3B. Phosphorylation by GSK3B reduces its association with PP1C and enhances PP1C activity. Dephosphorylation by its associated PP1C results in enhanced association with PP1C, but reduced PP1C activity.

It localises to the cell membrane. Its subcellular location is the nucleus. It is found in the cell projection. Regulator of protein phosphatase 1 (PP1) that acts as a positive regulator of pulmonary endothelial cell (EC) barrier function. Involved in the regulation of the PI3K/AKT signaling pathway, angiogenesis and endothelial cell proliferation. Regulates angiogenesis and endothelial cell proliferation through the control of ECE1 dephosphorylation, trafficking and activity. Protects the endothelial barrier from lipopolysaccharide (LPS)-induced vascular leakage. Involved in the regulation of endothelial cell filopodia extension. May be a downstream target for TGF-beta1 signaling cascade in endothelial cells. Involved in PKA-mediated moesin dephosphorylation which is important in EC barrier protection against thrombin stimulation. Promotes the interaction of PPP1CA with RPSA/LAMR1 and in turn facilitates the dephosphorylation of RPSA/LAMR1. Involved in the dephosphorylation of EEF1A1. The protein is Protein phosphatase 1 regulatory inhibitor subunit 16B (PPP1R16B) of Homo sapiens (Human).